The following is a 552-amino-acid chain: uncharacterized protein (552 aa).

It belongs to the transposase 25 family.

This is an uncharacterized protein from Sinorhizobium fredii (strain NBRC 101917 / NGR234).